Reading from the N-terminus, the 204-residue chain is Uridylate kinase (204 aa).

G26–T31 serves as a coordination point for ATP. The segment at S46–V76 is NMP. A ribonucleoside 5'-phosphate contacts are provided by residues R52, Q74–V76, G104–R107, and Q111. The segment at E141–D151 is LID. R142 serves as a coordination point for ATP. A ribonucleoside 5'-phosphate contacts are provided by R148 and R159. R187 lines the ATP pocket.

This sequence belongs to the adenylate kinase family. UMP-CMP kinase subfamily. In terms of assembly, monomer. Mg(2+) is required as a cofactor.

It is found in the cytoplasm. Its subcellular location is the nucleus. It catalyses the reaction UMP + ATP = UDP + ADP. In terms of biological role, catalyzes the phosphorylation of pyrimidine nucleoside monophosphates at the expense of ATP. Plays an important role in de novo pyrimidine nucleotide biosynthesis. Has preference for UMP and dUMP as phosphate acceptors, but can also use CMP, dCMP, AMP, GMP, dGMP and dTMP. ATP and dATP are the best phosphate donors, but can also use GTP, dGTP, dCTP, and dTTP to some degree. The chain is Uridylate kinase from Saccharomyces cerevisiae (strain ATCC 204508 / S288c) (Baker's yeast).